The following is an 81-amino-acid chain: Photosystem I iron-sulfur center (81 aa).

2 consecutive 4Fe-4S ferredoxin-type domains span residues 2 to 31 (SHTV…MVPW) and 39 to 68 (IASS…IRVY). C11, C14, C17, C21, C48, C51, C54, and C58 together coordinate [4Fe-4S] cluster.

In terms of assembly, the cyanobacterial PSI reaction center is composed of one copy each of PsaA,B,C,D,E,F,I,J,K,L,M and X, and forms trimeric complexes. It depends on [4Fe-4S] cluster as a cofactor.

The protein resides in the cellular thylakoid membrane. The enzyme catalyses reduced [plastocyanin] + hnu + oxidized [2Fe-2S]-[ferredoxin] = oxidized [plastocyanin] + reduced [2Fe-2S]-[ferredoxin]. Its function is as follows. Apoprotein for the two 4Fe-4S centers FA and FB of photosystem I (PSI); essential for photochemical activity. FB is the terminal electron acceptor of PSI, donating electrons to ferredoxin. The C-terminus interacts with PsaA/B/D and helps assemble the protein into the PSI complex. Required for binding of PsaD and PsaE to PSI. PSI is a plastocyanin/cytochrome c6-ferredoxin oxidoreductase, converting photonic excitation into a charge separation, which transfers an electron from the donor P700 chlorophyll pair to the spectroscopically characterized acceptors A0, A1, FX, FA and FB in turn. This Microchaete diplosiphon (Fremyella diplosiphon) protein is Photosystem I iron-sulfur center.